Here is a 448-residue protein sequence, read N- to C-terminus: Tubulin beta chain (448 aa).

GTP contacts are provided by Gln11, Glu69, Ser138, Gly142, Thr143, Gly144, Asn204, and Asn226. Residue Glu69 participates in Mg(2+) binding. Residues 425-448 (YQDASISEGEEEYLEEEEPLEHEE) form a disordered region. Residues 432-448 (EGEEEYLEEEEPLEHEE) are compositionally biased toward acidic residues.

It belongs to the tubulin family. Dimer of alpha and beta chains. A typical microtubule is a hollow water-filled tube with an outer diameter of 25 nm and an inner diameter of 15 nM. Alpha-beta heterodimers associate head-to-tail to form protofilaments running lengthwise along the microtubule wall with the beta-tubulin subunit facing the microtubule plus end conferring a structural polarity. Microtubules usually have 13 protofilaments but different protofilament numbers can be found in some organisms and specialized cells. Mg(2+) serves as cofactor.

Its subcellular location is the cytoplasm. The protein resides in the cytoskeleton. In terms of biological role, tubulin is the major constituent of microtubules, a cylinder consisting of laterally associated linear protofilaments composed of alpha- and beta-tubulin heterodimers. Microtubules grow by the addition of GTP-tubulin dimers to the microtubule end, where a stabilizing cap forms. Below the cap, tubulin dimers are in GDP-bound state, owing to GTPase activity of alpha-tubulin. The chain is Tubulin beta chain (benR) from Aspergillus parasiticus.